Reading from the N-terminus, the 773-residue chain is Jhy protein homolog (773 aa).

Disordered regions lie at residues 1–247 (MSHS…SKQY), 325–373 (WSQY…KSLV), 496–526 (KKHP…QPKL), 596–615 (ESES…KISR), and 713–743 (AKTI…KEDT). Over residues 10–28 (VSIQSPVHHTNIKVQSTEP) the composition is skewed to polar residues. Basic and acidic residues predominate over residues 29–43 (SFKKEDLHLISKDSL). Over residues 48–57 (ESPTQKIKSQ) the composition is skewed to polar residues. The segment covering 59-84 (DLEDQIQDNDMEPDSLEEENLSETEE) has biased composition (acidic residues). Basic and acidic residues predominate over residues 112 to 134 (PTEDKYSHIRYDPNWKSKKEEGK). Positions 145 to 154 (VDSSTENLTL) are enriched in polar residues. Residues 216–229 (SNLSRYLKSSSSRS) are compositionally biased toward low complexity. Residues 334-351 (SSGPRGQSSETTNGQQPS) are compositionally biased toward polar residues. A compositionally biased stretch (basic residues) spans 353–369 (KPAKHKIRKQRRHRHGP). The span at 500–516 (SGSQKGSQSVSNINRQA) shows a compositional bias: polar residues. The span at 598–610 (ESQLSSERSQRNQ) shows a compositional bias: low complexity. Positions 728-743 (ASKEKKTPTHAGKEDT) are enriched in basic and acidic residues.

In terms of biological role, required for the normal development of cilia in brain ependymal cells lining the ventricular surfaces. The polypeptide is Jhy protein homolog (JHY) (Bos taurus (Bovine)).